A 209-amino-acid polypeptide reads, in one-letter code: NAD(P)H-quinone oxidoreductase subunit I (209 aa).

2 4Fe-4S ferredoxin-type domains span residues 55–84 and 95–124; these read GRIHFEYDKCIACEVCVRVCPINLPVVDWE and KHYSIDFGVCIFCGNCVEYCPSNCLSMTEE. [4Fe-4S] cluster-binding residues include cysteine 64, cysteine 67, cysteine 70, cysteine 74, cysteine 104, cysteine 107, cysteine 110, and cysteine 114.

It belongs to the complex I 23 kDa subunit family. In terms of assembly, NDH-1 is composed of at least 11 different subunits. It depends on [4Fe-4S] cluster as a cofactor.

The protein resides in the cellular thylakoid membrane. The enzyme catalyses a plastoquinone + NADH + (n+1) H(+)(in) = a plastoquinol + NAD(+) + n H(+)(out). It catalyses the reaction a plastoquinone + NADPH + (n+1) H(+)(in) = a plastoquinol + NADP(+) + n H(+)(out). In terms of biological role, NDH-1 shuttles electrons from an unknown electron donor, via FMN and iron-sulfur (Fe-S) centers, to quinones in the respiratory and/or the photosynthetic chain. The immediate electron acceptor for the enzyme in this species is believed to be plastoquinone. Couples the redox reaction to proton translocation, and thus conserves the redox energy in a proton gradient. In Trichodesmium erythraeum (strain IMS101), this protein is NAD(P)H-quinone oxidoreductase subunit I.